A 428-amino-acid polypeptide reads, in one-letter code: 47 kDa outer membrane protein (428 aa).

A signal peptide spans Met-1 to Ala-25.

Belongs to the OmpP1/FadL family.

The protein resides in the cell outer membrane. This is 47 kDa outer membrane protein from Pasteurella multocida (strain Pm70).